Reading from the N-terminus, the 311-residue chain is Cytochrome f (311 aa).

The signal sequence occupies residues 1-27; it reads MKHFFKSLTLAIALAASVLFWSPQAQA. Residues tyrosine 28, cysteine 48, cysteine 51, and histidine 52 each contribute to the heme site. A helical membrane pass occupies residues 279–296; sequence WLLVFFAAITLSQILLVL.

Belongs to the cytochrome f family. The 4 large subunits of the cytochrome b6-f complex are cytochrome b6, subunit IV (17 kDa polypeptide, PetD), cytochrome f and the Rieske protein, while the 4 small subunits are PetG, PetL, PetM and PetN. The complex functions as a dimer. Heme is required as a cofactor.

Its subcellular location is the cellular thylakoid membrane. In terms of biological role, component of the cytochrome b6-f complex, which mediates electron transfer between photosystem II (PSII) and photosystem I (PSI), cyclic electron flow around PSI, and state transitions. The chain is Cytochrome f from Synechococcus elongatus.